We begin with the raw amino-acid sequence, 245 residues long: Eukaryotic translation initiation factor 6 (245 aa).

It belongs to the eIF-6 family. As to quaternary structure, monomer. Associates with the 60S ribosomal subunit.

It is found in the cytoplasm. It localises to the nucleus. The protein resides in the nucleolus. In terms of biological role, binds to the 60S ribosomal subunit and prevents its association with the 40S ribosomal subunit to form the 80S initiation complex in the cytoplasm. May also be involved in ribosome biogenesis. The protein is Eukaryotic translation initiation factor 6 of Tetrahymena thermophila (strain SB210).